Reading from the N-terminus, the 479-residue chain is MRNFEIVIGIENHVELKTKSKMFSSAPVSYGETPNTNVNETDMAYPGSLPTINKKGIELAIRTCNALNMEIDTLVKFDRKNYFYPDLTKGYQITQQYNPIGKNGKLNINVNGLTKEVDIERLHMEEDTAKQIHKDDLTYIDYNRAGTGLVEIVTRPVLRSADEACAYVEKLREVLLFLKVSDVKMNEGSLRTDVNISIRPFGTQEFSNKVEVKNLNSISNIKKAIEFEVERQTKLMLNNEIIIQETRRFDDTTNSTVSMRSKSDALDYKYFREPNIMPIQLKKEWVEDCIKNSPELADIKRIKYVNDYKISINDANIILTSIEMTEFFEETIKFTNNYTKVANILISDIQAQLNNENTTIDKLALLPSHLAEMINLVDQSVISSKHTKTILPIIMKDSSKSVIEIVEELNIKMISDENEIANLVNPIIESNLELLEQYSERPERVTKTIMGQLMKVTGGNVNPEAGMNIIIKLVENKIK.

Belongs to the GatB/GatE family. GatB subfamily. In terms of assembly, heterotrimer of A, B and C subunits.

It catalyses the reaction L-glutamyl-tRNA(Gln) + L-glutamine + ATP + H2O = L-glutaminyl-tRNA(Gln) + L-glutamate + ADP + phosphate + H(+). The catalysed reaction is L-aspartyl-tRNA(Asn) + L-glutamine + ATP + H2O = L-asparaginyl-tRNA(Asn) + L-glutamate + ADP + phosphate + 2 H(+). Allows the formation of correctly charged Asn-tRNA(Asn) or Gln-tRNA(Gln) through the transamidation of misacylated Asp-tRNA(Asn) or Glu-tRNA(Gln) in organisms which lack either or both of asparaginyl-tRNA or glutaminyl-tRNA synthetases. The reaction takes place in the presence of glutamine and ATP through an activated phospho-Asp-tRNA(Asn) or phospho-Glu-tRNA(Gln). This chain is Aspartyl/glutamyl-tRNA(Asn/Gln) amidotransferase subunit B, found in Mesoplasma florum (strain ATCC 33453 / NBRC 100688 / NCTC 11704 / L1) (Acholeplasma florum).